A 142-amino-acid chain; its full sequence is Large ribosomal subunit protein uL13 (142 aa).

Belongs to the universal ribosomal protein uL13 family. In terms of assembly, part of the 50S ribosomal subunit.

Its function is as follows. This protein is one of the early assembly proteins of the 50S ribosomal subunit, although it is not seen to bind rRNA by itself. It is important during the early stages of 50S assembly. In Stutzerimonas stutzeri (strain A1501) (Pseudomonas stutzeri), this protein is Large ribosomal subunit protein uL13.